We begin with the raw amino-acid sequence, 143 residues long: Small ribosomal subunit protein uS9 (143 aa).

Residues 123 to 143 (RPEPKKFGGRGARARFQKSYR) form a disordered region. Positions 134-143 (ARARFQKSYR) are enriched in basic residues.

This sequence belongs to the universal ribosomal protein uS9 family.

The polypeptide is Small ribosomal subunit protein uS9 (RPS16) (Eremothecium gossypii (strain ATCC 10895 / CBS 109.51 / FGSC 9923 / NRRL Y-1056) (Yeast)).